Consider the following 192-residue polypeptide: NADH dehydrogenase [ubiquinone] iron-sulfur protein 3 (192 aa).

The protein belongs to the complex I 30 kDa subunit family. In terms of assembly, complex I is composed of about 45 different subunits. This is a component of the iron-sulfur (IP) fragment of the enzyme.

It is found in the mitochondrion inner membrane. The enzyme catalyses a ubiquinone + NADH + 5 H(+)(in) = a ubiquinol + NAD(+) + 4 H(+)(out). Its function is as follows. Core subunit of the mitochondrial membrane respiratory chain NADH dehydrogenase (Complex I) that is believed to belong to the minimal assembly required for catalysis. Complex I functions in the transfer of electrons from NADH to the respiratory chain. The immediate electron acceptor for the enzyme is believed to be ubiquinone. This Beta trigyna (Caucasian wild beet) protein is NADH dehydrogenase [ubiquinone] iron-sulfur protein 3 (NAD9).